We begin with the raw amino-acid sequence, 739 residues long: Phosphoribosylformylglycinamidine synthase subunit PurL (739 aa).

His55 is a catalytic residue. 2 residues coordinate ATP: Tyr58 and Lys97. Glu99 provides a ligand contact to Mg(2+). Residues 100 to 103 (SHNH) and Arg122 contribute to the substrate site. The active-site Proton acceptor is the His101. Residue Asp123 participates in Mg(2+) binding. Gln246 serves as a coordination point for substrate. Residue Asp276 participates in Mg(2+) binding. A substrate-binding site is contributed by 320–322 (ESQ). ATP is bound by residues Asp502 and Gly539. Asn540 lines the Mg(2+) pocket. Ser542 contacts substrate.

Belongs to the FGAMS family. Monomer. Part of the FGAM synthase complex composed of 1 PurL, 1 PurQ and 2 PurS subunits.

It is found in the cytoplasm. It carries out the reaction N(2)-formyl-N(1)-(5-phospho-beta-D-ribosyl)glycinamide + L-glutamine + ATP + H2O = 2-formamido-N(1)-(5-O-phospho-beta-D-ribosyl)acetamidine + L-glutamate + ADP + phosphate + H(+). It participates in purine metabolism; IMP biosynthesis via de novo pathway; 5-amino-1-(5-phospho-D-ribosyl)imidazole from N(2)-formyl-N(1)-(5-phospho-D-ribosyl)glycinamide: step 1/2. Its function is as follows. Part of the phosphoribosylformylglycinamidine synthase complex involved in the purines biosynthetic pathway. Catalyzes the ATP-dependent conversion of formylglycinamide ribonucleotide (FGAR) and glutamine to yield formylglycinamidine ribonucleotide (FGAM) and glutamate. The FGAM synthase complex is composed of three subunits. PurQ produces an ammonia molecule by converting glutamine to glutamate. PurL transfers the ammonia molecule to FGAR to form FGAM in an ATP-dependent manner. PurS interacts with PurQ and PurL and is thought to assist in the transfer of the ammonia molecule from PurQ to PurL. This Lactiplantibacillus plantarum (strain ATCC BAA-793 / NCIMB 8826 / WCFS1) (Lactobacillus plantarum) protein is Phosphoribosylformylglycinamidine synthase subunit PurL.